The primary structure comprises 351 residues: Transmembrane protein DDB_G0272716 (351 aa).

Asn4 and Asn59 each carry an N-linked (GlcNAc...) asparagine glycan. The next 2 membrane-spanning stretches (helical) occupy residues 175 to 195 and 215 to 235; these read FSSL…TAIG and VVAP…GAFI. Asn345 is a glycosylation site (N-linked (GlcNAc...) asparagine).

The protein localises to the membrane. The protein is Transmembrane protein DDB_G0272716 of Dictyostelium discoideum (Social amoeba).